Reading from the N-terminus, the 106-residue chain is Replication protein A 14 kDa subunit B (106 aa).

At Met-1 the chain carries N-acetylmethionine.

It belongs to the replication factor A protein 3 family. As to quaternary structure, component of the heterotrimeric canonical replication protein A complex (RPA).

The protein resides in the nucleus. Functionally, as part of the replication protein A (RPA/RP-A), a single-stranded DNA-binding heterotrimeric complex, may play an essential role in DNA replication, recombination and repair. Binds and stabilizes single-stranded DNA intermediates, preventing complementary DNA reannealing and recruiting different proteins involved in DNA metabolism. The protein is Replication protein A 14 kDa subunit B (RPA3B) of Arabidopsis thaliana (Mouse-ear cress).